Reading from the N-terminus, the 838-residue chain is E3 ubiquitin-protein ligase RNF19A (838 aa).

The interval 41–61 (DRDLQSSASSVSLPSVKKAPK) is disordered. Over residues 46–57 (SSASSVSLPSVK) the composition is skewed to low complexity. The interval 128–351 (DFIECPLCLL…LSPSGCTFWG (224 aa)) is TRIAD supradomain. Residues Cys-132, Cys-135, Cys-150, His-152, Cys-155, Cys-158, Cys-176, Cys-179, Cys-219, Cys-224, Cys-241, Cys-246, Cys-251, Cys-254, His-259, Cys-264, Cys-301, and Cys-304 each contribute to the Zn(2+) site. The RING-type 1 zinc finger occupies 132-179 (CPLCLLRHSKDRFPDIMTCHHRSCVDCLRQYLRIEISESRVNISCPEC). An IBR-type zinc finger spans residues 199 to 264 (EKYEEFMLRR…KQIWHPNQTC (66 aa)). Residues 301-332 (CPRCAAYIIKMNDGSCNHMTCAVCGCEFCWLC) form an RING-type 2; atypical zinc finger. Cys-316 is an active-site residue. Residues Cys-321, Cys-324, Cys-329, Cys-332, His-340, and Cys-347 each coordinate Zn(2+). Helical transmembrane passes span 368 to 388 (LVGAPVGIALIAGIAIPAMII) and 424 to 444 (VIVSPVVAAVTVGIGVPIMLA). 2 disordered regions span residues 622 to 685 (SKPS…GNMK) and 700 to 721 (QQSTNSSEFEAPSLSDSMPSVA). The span at 630–662 (NSGSSSVDDGSATRSHAGGSSSGLPEGKSSATK) shows a compositional bias: polar residues. Ser-631 carries the post-translational modification Phosphoserine. Residues 660–838 (ATKWSKEATA…ELKVAIQTEI (179 aa)) form an interaction with CASR region. Residues 671–683 (KKSKSGKLRKKGN) are compositionally biased toward basic residues. Positions 700–717 (QQSTNSSEFEAPSLSDSM) are enriched in polar residues.

This sequence belongs to the RBR family. RNF19 subfamily. Interacts with UBE2L3 and UBE2L6. Interacts with transcription factor Sp1. Interacts with VCP, CASR, SNCAIP and with some SOD1 variants which cause amyotrophic lateral sclerosis, but not with wild-type SOD1. As to expression, widely expressed, with highest levels in heart. Ubiquitously expressed in the central nervous system.

It localises to the membrane. It is found in the cytoplasm. The protein localises to the cytoskeleton. The protein resides in the microtubule organizing center. Its subcellular location is the centrosome. The enzyme catalyses [E2 ubiquitin-conjugating enzyme]-S-ubiquitinyl-L-cysteine + [acceptor protein]-L-lysine = [E2 ubiquitin-conjugating enzyme]-L-cysteine + [acceptor protein]-N(6)-ubiquitinyl-L-lysine.. Its pathway is protein modification; protein ubiquitination. Functionally, E3 ubiquitin-protein ligase which accepts ubiquitin from E2 ubiquitin-conjugating enzymes UBE2L3 and UBE2L6 in the form of a thioester and then directly transfers the ubiquitin to targeted substrates, such as SNCAIP or CASR. Specifically ubiquitinates pathogenic SOD1 variants, which leads to their proteasomal degradation and to neuronal protection. This Homo sapiens (Human) protein is E3 ubiquitin-protein ligase RNF19A (RNF19A).